We begin with the raw amino-acid sequence, 305 residues long: Oxygen-dependent coproporphyrinogen-III oxidase (305 aa).

Ser-98 serves as a coordination point for substrate. Residues His-102 and His-112 each coordinate a divalent metal cation. His-112 functions as the Proton donor in the catalytic mechanism. 114-116 (NVR) contributes to the substrate binding site. A divalent metal cation-binding residues include His-151 and His-181. The important for dimerization stretch occupies residues 246–281 (YVEFNLVYDRGTLFGLQSGGRTESILMSMPPLARWE). Position 264 to 266 (264 to 266 (GGR)) interacts with substrate.

The protein belongs to the aerobic coproporphyrinogen-III oxidase family. In terms of assembly, homodimer. A divalent metal cation is required as a cofactor.

The protein localises to the cytoplasm. The enzyme catalyses coproporphyrinogen III + O2 + 2 H(+) = protoporphyrinogen IX + 2 CO2 + 2 H2O. The protein operates within porphyrin-containing compound metabolism; protoporphyrin-IX biosynthesis; protoporphyrinogen-IX from coproporphyrinogen-III (O2 route): step 1/1. Its function is as follows. Involved in the heme biosynthesis. Catalyzes the aerobic oxidative decarboxylation of propionate groups of rings A and B of coproporphyrinogen-III to yield the vinyl groups in protoporphyrinogen-IX. This Vibrio parahaemolyticus serotype O3:K6 (strain RIMD 2210633) protein is Oxygen-dependent coproporphyrinogen-III oxidase.